The sequence spans 716 residues: MFEIMRKTIEWGGKTLVLETGRIARQADGAVLATMGETVVLATAVFAKKAKPGQDFFPLTVNYIEKTYAAGKIPGGFFKREGRPSEKETLVSRLIDRPIRPLFVKGFKNEVQVVCTVLQHDLENDPDIVAMCAASAALVISGAPFMGPIGGCRVGYVNDEYILNPTLDELKESKMDLVVAGTADAVMMVESEIQELSEEIVLGGVSFAHKSMQAVINGIIELAEHAAKEPFDFQPEDTDALKAEVKKAVGADLADAYTIRAKGDRHAALSAAKSKAVDTFAKSDANPAGIDPLKLISVFKELEADIVRRSILDTGIRIDGRTVDTVRPILGEVGILPRTHGSALFTRGETQAIVVATLGTGDDEQFIDALEGTYKEAFLLHYNFPPFSVGETGRMGSPGRREIGHGKLAWRALRPMLPAKEDFPYTIRLVSEITESNGSSSMATVCGASLAMMDAGVPLIRPVSGIAMGLILEKDGFAVLSDILGDEDHLGDMDFKVAGTSQGLTSLQMDIKIAGITEEIMKQALAQAKGGREHILGEMNKAMDAPREEVGDYAPKIETITIPTDKIREVIGTGGKVIREIVATTGAKVDINDEGTVKVSASDGAKIKAAIDWIKSITQEAEVGAIYDGKVVKVVDFGAFVNFFGAKDGLVHVSQISNERVAKPSDVLKEGQIVKVKLLGFDDRGKTKLSMKVVDQETGEDLSKKEAVSPEEAVNT.

Asp-488 and Asp-494 together coordinate Mg(2+). The KH domain maps to 555-614 (PKIETITIPTDKIREVIGTGGKVIREIVATTGAKVDINDEGTVKVSASDGAKIKAAIDWI). The 69-residue stretch at 624 to 692 (GAIYDGKVVK…DRGKTKLSMK (69 aa)) folds into the S1 motif domain. A disordered region spans residues 695 to 716 (DQETGEDLSKKEAVSPEEAVNT).

The protein belongs to the polyribonucleotide nucleotidyltransferase family. Mg(2+) serves as cofactor.

Its subcellular location is the cytoplasm. It catalyses the reaction RNA(n+1) + phosphate = RNA(n) + a ribonucleoside 5'-diphosphate. Involved in mRNA degradation. Catalyzes the phosphorolysis of single-stranded polyribonucleotides processively in the 3'- to 5'-direction. This chain is Polyribonucleotide nucleotidyltransferase, found in Caulobacter sp. (strain K31).